The following is a 431-amino-acid chain: MRPEESWSRVGLVQCEEADSALEEPINVEEEDGGLQICRVCGDKANGYHFNVMTCEGCKGFFRRAMKRNVRLRCPFRKGTCEITRKTRRQCQACRLRKCLESGMKKEMIMSDAAVEQRRALIKRKKREKIEAPPPGGQGLTEEQQALIQELMDAQMQTFDTTFSHFKDFRLPAVFHSGCELPEFLQASLLEDPATWSQIMKDRVPMKISLQLRGEDGSIWNYQPPSKSDGKEIIPLLPHLADVSTYMFKGVINFAKVISYFRDLPIEDQISLLKGATFEMCILRFNTMFDTETGTWECGRLAYCFEDPNGGFQKLLLDPLMKFHCMLKKLQLHKEEYVLMQAISLFSPDRPGVVQRSVVDQLQERFALTLKAYIECSRPYPAHRFLFLKIMAVLTELRSINAQQTQQLLRIQDSHPFATPLMQELFSSTDG.

The nuclear receptor DNA-binding region spans 35–104 (LQICRVCGDK…RLRKCLESGM (70 aa)). NR C4-type zinc fingers lie at residues 38–58 (CRVC…CEGC) and 74–99 (CPFR…LRKC). The short motif at 63-89 (RRAMKRNVRLRCPFRKGTCEITRKTRR) is the Bipartite nuclear localization signal element. A hinge region spans residues 105–142 (KKEMIMSDAAVEQRRALIKRKKREKIEAPPPGGQGLTE). Residues 143–430 (EQQALIQELM…LMQELFSSTD (288 aa)) form the NR LBD domain. Residues Ser244 and 282–285 (ILRF) each bind hyperforin.

Belongs to the nuclear hormone receptor family. NR1 subfamily. As to quaternary structure, heterodimer with RXRA. Interacts with NCOA1. Interacts (via domain NR LBD) with CRY1 and CRY2 in a ligand-dependent manner.

The protein localises to the nucleus. Functionally, nuclear receptor that binds and is activated by a variety of endogenous and xenobiotic compounds. Transcription factor that activates the transcription of multiple genes involved in the metabolism and secretion of potentially harmful xenobiotics, endogenous compounds and drugs. Response to specific ligands is species-specific, due to differences in the ligand-binding domain. Binds to a response element in the promoters of the CYP3A4 and ABCB1/MDR1 genes. Activated by naturally occurring steroids such as pregnenolone and progesterone, the cholesterol metabolite 5-beta-cholestane-3-alpha,7-alpha,12-alpha-triol, synthetic glucocorticoids and antiglucocorticoids and 16-alpha-carbonitrile (PCN). The sequence is that of Nuclear receptor subfamily 1 group I member 2 (Nr1i2) from Mus musculus (Mouse).